The chain runs to 478 residues: Adenylosuccinate lyase (478 aa).

Residues 14–15, 81–83, and 107–108 each bind substrate; these read RY, KHD, and TS. His-155 serves as the catalytic Proton donor/acceptor. Gln-237 is a binding site for substrate. Ser-285 functions as the Proton donor/acceptor in the catalytic mechanism. The substrate site is built by Arg-299, Arg-325, Ser-330, and Arg-334.

This sequence belongs to the lyase 1 family. Adenylosuccinate lyase subfamily. As to quaternary structure, homotetramer. Residues from neighboring subunits contribute catalytic and substrate-binding residues to each active site.

The enzyme catalyses N(6)-(1,2-dicarboxyethyl)-AMP = fumarate + AMP. It carries out the reaction (2S)-2-[5-amino-1-(5-phospho-beta-D-ribosyl)imidazole-4-carboxamido]succinate = 5-amino-1-(5-phospho-beta-D-ribosyl)imidazole-4-carboxamide + fumarate. It participates in purine metabolism; AMP biosynthesis via de novo pathway; AMP from IMP: step 2/2. Its pathway is purine metabolism; IMP biosynthesis via de novo pathway; 5-amino-1-(5-phospho-D-ribosyl)imidazole-4-carboxamide from 5-amino-1-(5-phospho-D-ribosyl)imidazole-4-carboxylate: step 2/2. Catalyzes two non-sequential steps in de novo AMP synthesis: converts (S)-2-(5-amino-1-(5-phospho-D-ribosyl)imidazole-4-carboxamido)succinate (SAICAR) to fumarate plus 5-amino-1-(5-phospho-D-ribosyl)imidazole-4-carboxamide, and thereby also contributes to de novo IMP synthesis, and converts succinyladenosine monophosphate (SAMP) to AMP and fumarate. This Caenorhabditis briggsae protein is Adenylosuccinate lyase.